The following is a 799-amino-acid chain: DISARM protein DrmE (799 aa).

The protein resides in the cytoplasm. In terms of biological role, component of antiviral defense system DISARM (defense island system associated with restriction-modification), composed of DrmE, DrmA, DrmB, DrmC and DrmMII. DISARM is probably a multi-gene restriction module, this subunit has an unknown function. Expression of DISARM in B.subtilis (strain BEST7003) confers resistance to phages Nf, phi29, phi105, phi3T, SPO1, SPR and SPP1. Protection is over 10(7)-fold against phi3T, 10(4)-10(5)-fold against Nf, phi29, phi105 and SPR, 100-fold against SPO1 and 10-fold against SPP1. DISARM does not interfere with phage adsorption, but instead interferes with (phi3T) DNA replication early in its cycle, preventing replication, circularization and lysogeny and probably causes phage DNA degradation (DNA is degraded in SPP1-infected cells). This chain is DISARM protein DrmE, found in Bacillus paralicheniformis (strain ATCC 9945a / NCIMB 11709 / CD-2).